The chain runs to 310 residues: Zinc transporter ZIP9 (310 aa).

A run of 8 helical transmembrane segments spans residues 7–27 (ISLL…IPLA), 35–55 (LKLI…AVII), 108–128 (ACIG…DQIG), 148–168 (ITTT…LGAA), 178–198 (LIVF…LVSF), 212–232 (HLLV…LGLS), 246–266 (GVAM…HVLP), and 289–309 (VEVV…VGHH).

This sequence belongs to the ZIP transporter (TC 2.A.5) family. Expressed in brain, liver, ovary, and testis.

It localises to the golgi apparatus. It is found in the trans-Golgi network membrane. Its subcellular location is the cell membrane. The protein resides in the cytoplasm. The protein localises to the perinuclear region. It localises to the mitochondrion. It is found in the nucleus. The enzyme catalyses Zn(2+)(in) = Zn(2+)(out). Its function is as follows. Has dual functions as a membrane-bound androgen receptor and as an androgen-dependent zinc transporter both of which are mediated through G protein activation and are required for the androgen-dependent apoptotic response. Upon androgen binding, mediates apoptosis by directly activating a stimulatory G protein that leads to increased cAMP levels and MAP kinase activity and which is accompanied by increased intracellular free zinc levels. This is Zinc transporter ZIP9 from Micropogonias undulatus (Atlantic croaker).